Here is a 1448-residue protein sequence, read N- to C-terminus: Gag-Pol polyprotein (1448 aa).

Residue G2 is the site of N-myristoyl glycine; by host attachment. Residues 16–22 (WEKIYLR) carry the Nuclear export signal motif. Residues 26-32 (KKKYMMK) carry the Nuclear localization signal motif. A compositionally biased stretch (basic and acidic residues) spans 107-116 (KMKAEQKEPE). The segment at 107 to 129 (KMKAEQKEPEPEQAAGAAAAPES) is disordered. The span at 118–128 (EQAAGAAAAPE) shows a compositional bias: low complexity. Y135 carries the post-translational modification Phosphotyrosine; by host. CCHC-type zinc fingers lie at residues 393–410 (IKCFNCGKEGHLARNCKA) and 414–431 (KGCWKCGQEGHQMKDCRS). Basic and acidic residues-rich tracts occupy residues 446 to 460 (REARKFPPDNNKERA) and 473 to 490 (GEDHTGDREGRKGEDREL). The tract at residues 446-490 (REARKFPPDNNKERANSPSNRELWVSGGEDHTGDREGRKGEDREL) is disordered. A Peptidase A2 domain is found at 517 to 586 (KEALLDTGAD…TPVNIIGRNF (70 aa)). D522 serves as the catalytic For protease activity; shared with dimeric partner. Residues 640 to 830 (EGKISRIGPE…PPFLWMGYEL (191 aa)) form the Reverse transcriptase domain. Mg(2+)-binding residues include D706, D781, and D782. The segment at 823–831 (FLWMGYELH) is RT 'primer grip'. The Tryptophan repeat motif signature appears at 994 to 1010 (WETWWTEYWQATWIPDW). The 124-residue stretch at 1030–1153 (ISGAETYYVD…IDKLVSTGIR (124 aa)) folds into the RNase H type-1 domain. Mg(2+) is bound by residues D1039, E1074, D1094, and D1145. The Integrase-type zinc-finger motif lies at 1159–1200 (DGIDKAQEEHERYHSNWKAMASDFNLPPIVAKEIVASCDKCQ). H1168, H1172, C1196, and C1199 together coordinate Zn(2+). Residues 1210 to 1360 (INCSPGVWQL…TAGERIIDII (151 aa)) form the Integrase catalytic domain. The Mg(2+) site is built by D1220 and D1272. Residues 1379-1426 (FRVYYRDSREPTWKGPAKLLWKGEGAVVIQDNGDIKVVPRRKAKIIRD) constitute a DNA-binding region (integrase-type).

Homotrimer. Interacts with gp41 (via C-terminus). As to quaternary structure, homodimer. The active site consists of two apposed aspartic acid residues. In terms of assembly, heterodimer of p66 RT and p51 RT (RT p66/p51). Heterodimerization of RT is essential for DNA polymerase activity. Despite the sequence identities, p66 RT and p51 RT have distinct folding. Homotetramer; may further associate as a homohexadecamer. Mg(2+) serves as cofactor. Post-translationally, specific enzymatic cleavages by the viral protease yield mature proteins. The protease is released by autocatalytic cleavage. The polyprotein is cleaved during and after budding, this process is termed maturation. Proteolytic cleavage of p66 RT removes the RNase H domain to yield the p51 RT subunit. In terms of processing, capsid protein p24 is phosphorylated.

Its subcellular location is the virion. The protein localises to the host nucleus. It localises to the host cytoplasm. The protein resides in the host cell membrane. The enzyme catalyses Specific for a P1 residue that is hydrophobic, and P1' variable, but often Pro.. It carries out the reaction Endohydrolysis of RNA in RNA/DNA hybrids. Three different cleavage modes: 1. sequence-specific internal cleavage of RNA. Human immunodeficiency virus type 1 and Moloney murine leukemia virus enzymes prefer to cleave the RNA strand one nucleotide away from the RNA-DNA junction. 2. RNA 5'-end directed cleavage 13-19 nucleotides from the RNA end. 3. DNA 3'-end directed cleavage 15-20 nucleotides away from the primer terminus.. It catalyses the reaction 3'-end directed exonucleolytic cleavage of viral RNA-DNA hybrid.. The catalysed reaction is DNA(n) + a 2'-deoxyribonucleoside 5'-triphosphate = DNA(n+1) + diphosphate. Its activity is regulated as follows. The viral protease is inhibited by many synthetic protease inhibitors (PIs), such as amprenavir, atazanavir, indinavir, loprinavir, nelfinavir, ritonavir and saquinavir. RT can be inhibited either by nucleoside RT inhibitors (NRTIs) or by non nucleoside RT inhibitors (NNRTIs). NRTIs act as chain terminators, whereas NNRTIs inhibit DNA polymerization by binding a small hydrophobic pocket near the RT active site and inducing an allosteric change in this region. Classical NRTIs are abacavir, adefovir (PMEA), didanosine (ddI), lamivudine (3TC), stavudine (d4T), tenofovir (PMPA), zalcitabine (ddC), and zidovudine (AZT). Classical NNRTIs are atevirdine (BHAP U-87201E), delavirdine, efavirenz (DMP-266), emivirine (I-EBU), and nevirapine (BI-RG-587). The tritherapies used as a basic effective treatment of AIDS associate two NRTIs and one NNRTI. Use of protease inhibitors in tritherapy regimens permit more ambitious therapeutic strategies. Its function is as follows. Gag-Pol polyprotein and Gag polyprotein may regulate their own translation, by the binding genomic RNA in the 5'-UTR. At low concentration, Gag-Pol and Gag would promote translation, whereas at high concentration, the polyproteins encapsidate genomic RNA and then shut off translation. Matrix protein p17 has two main functions: in infected cell, it targets Gag and Gag-pol polyproteins to the plasma membrane via a multipartite membrane-binding signal, that includes its myristointegration complex. The myristoylation signal and the NLS exert conflicting influences its subcellular localization. The key regulation of these motifs might be phosphorylation of a portion of MA molecules on the C-terminal tyrosine at the time of virus maturation, by virion-associated cellular tyrosine kinase. Implicated in the release from host cell mediated by Vpu. In terms of biological role, capsid protein p24 forms the conical core that encapsulates the genomic RNA-nucleocapsid complex in the virion. The core is constituted by capsid protein hexamer subunits. The core is disassembled soon after virion entry. Interaction with host PPIA/CYPA protects the virus from restriction by host TRIM5-alpha and from an unknown antiviral activity in host cells. This capsid restriction by TRIM5 is one of the factors which restricts SIV to the simian species. Functionally, nucleocapsid protein p7 encapsulates and protects viral dimeric unspliced (genomic) RNA. Binds these RNAs through its zinc fingers. Facilitates rearangement of nucleic acid secondary structure during retrotranscription of genomic RNA. This capability is referred to as nucleic acid chaperone activity. Its function is as follows. The aspartyl protease mediates proteolytic cleavages of Gag and Gag-Pol polyproteins during or shortly after the release of the virion from the plasma membrane. Cleavages take place as an ordered, step-wise cascade to yield mature proteins. This process is called maturation. Displays maximal activity during the budding process just prior to particle release from the cell. Also cleaves Nef and Vif, probably concomitantly with viral structural proteins on maturation of virus particles. Hydrolyzes host EIF4GI and PABP1 in order to shut off the capped cellular mRNA translation. The resulting inhibition of cellular protein synthesis serves to ensure maximal viral gene expression and to evade host immune response. Reverse transcriptase/ribonuclease H (RT) is a multifunctional enzyme that converts the viral dimeric RNA genome into dsDNA in the cytoplasm, shortly after virus entry into the cell. This enzyme displays a DNA polymerase activity that can copy either DNA or RNA templates, and a ribonuclease H (RNase H) activity that cleaves the RNA strand of RNA-DNA heteroduplexes in a partially processive 3' to 5' endonucleasic mode. Conversion of viral genomic RNA into dsDNA requires many steps. A tRNA binds to the primer-binding site (PBS) situated at the 5'-end of the viral RNA. RT uses the 3' end of the tRNA primer to perform a short round of RNA-dependent minus-strand DNA synthesis. The reading proceeds through the U5 region and ends after the repeated (R) region which is present at both ends of viral RNA. The portion of the RNA-DNA heteroduplex is digested by the RNase H, resulting in a ssDNA product attached to the tRNA primer. This ssDNA/tRNA hybridizes with the identical R region situated at the 3' end of viral RNA. This template exchange, known as minus-strand DNA strong stop transfer, can be either intra- or intermolecular. RT uses the 3' end of this newly synthesized short ssDNA to perform the RNA-dependent minus-strand DNA synthesis of the whole template. RNase H digests the RNA template except for two polypurine tracts (PPTs) situated at the 5'-end and near the center of the genome. It is not clear if both polymerase and RNase H activities are simultaneous. RNase H can probably proceed both in a polymerase-dependent (RNA cut into small fragments by the same RT performing DNA synthesis) and a polymerase-independent mode (cleavage of remaining RNA fragments by free RTs). Secondly, RT performs DNA-directed plus-strand DNA synthesis using the PPTs that have not been removed by RNase H as primers. PPTs and tRNA primers are then removed by RNase H. The 3' and 5' ssDNA PBS regions hybridize to form a circular dsDNA intermediate. Strand displacement synthesis by RT to the PBS and PPT ends produces a blunt ended, linear dsDNA copy of the viral genome that includes long terminal repeats (LTRs) at both ends. In terms of biological role, integrase catalyzes viral DNA integration into the host chromosome, by performing a series of DNA cutting and joining reactions. This enzyme activity takes place after virion entry into a cell and reverse transcription of the RNA genome in dsDNA. The first step in the integration process is 3' processing. This step requires a complex comprising the viral genome, matrix protein, Vpr and integrase. This complex is called the pre-integration complex (PIC). The integrase protein removes 2 nucleotides from each 3' end of the viral DNA, leaving recessed CA OH's at the 3' ends. In the second step, the PIC enters cell nucleus. This process is mediated through integrase and Vpr proteins, and allows the virus to infect a non dividing cell. This ability to enter the nucleus is specific of lentiviruses, other retroviruses cannot and rely on cell division to access cell chromosomes. In the third step, termed strand transfer, the integrase protein joins the previously processed 3' ends to the 5' ends of strands of target cellular DNA at the site of integration. The 5'-ends are produced by integrase-catalyzed staggered cuts, 5 bp apart. A Y-shaped, gapped, recombination intermediate results, with the 5'-ends of the viral DNA strands and the 3' ends of target DNA strands remaining unjoined, flanking a gap of 5 bp. The last step is viral DNA integration into host chromosome. This involves host DNA repair synthesis in which the 5 bp gaps between the unjoined strands are filled in and then ligated. Since this process occurs at both cuts flanking the SIV genome, a 5 bp duplication of host DNA is produced at the ends of SIV integration. Alternatively, Integrase may catalyze the excision of viral DNA just after strand transfer, this is termed disintegration. The chain is Gag-Pol polyprotein (gag-pol) from Pan troglodytes (Chimpanzee).